We begin with the raw amino-acid sequence, 105 residues long: MASQVMRITLKAYDHELVDSSAKKIIETVKKNGSQVSGPVPLPTKKEVVTILRATHKYKDSREQFEQRTHKRLIDIINPTQKTTESLSRIEMPAGVYIDIKMKQK.

The protein belongs to the universal ribosomal protein uS10 family. In terms of assembly, part of the 30S ribosomal subunit.

Its function is as follows. Involved in the binding of tRNA to the ribosomes. The protein is Small ribosomal subunit protein uS10 of Agathobacter rectalis (strain ATCC 33656 / DSM 3377 / JCM 17463 / KCTC 5835 / VPI 0990) (Eubacterium rectale).